A 326-amino-acid polypeptide reads, in one-letter code: Diphthine methyltransferase (326 aa).

WD repeat units lie at residues methionine 65–phenylalanine 105, aspartate 113–lysine 152, glutamate 155–tryptophan 195, and glutamate 293–isoleucine 326.

It belongs to the DPH7 family.

It localises to the cytoplasm. It is found in the nucleus. The catalysed reaction is diphthine methyl ester-[translation elongation factor 2] + H2O = diphthine-[translation elongation factor 2] + methanol + H(+). It participates in protein modification; peptidyl-diphthamide biosynthesis. Catalyzes the demethylation of diphthine methyl ester to form diphthine, an intermediate in diphthamide biosynthesis, a post-translational modification of histidine which occurs in translation elongation factor 2 (eft201 and eft202). The polypeptide is Diphthine methyltransferase (rrt2) (Schizosaccharomyces pombe (strain 972 / ATCC 24843) (Fission yeast)).